The following is a 514-amino-acid chain: L-carnitine/gamma-butyrobetaine antiporter (514 aa).

Over 1 to 11 (MSKDNKKAGIE) the chain is Cytoplasmic. A helical transmembrane segment spans residues 12-30 (PKVFFPPLIIVGILCWLTV). The Periplasmic portion of the chain corresponds to 31-42 (RDLDASNEVINA). Residues 43–68 (VFSYVTNVWGWAFEWYMVIMFGGWFW) form a helical membrane-spanning segment. The Cytoplasmic portion of the chain corresponds to 69–91 (LVFGRYAKKRLGDEKPEFSTASW). A helical membrane pass occupies residues 92 to 112 (IFMMFASCTSAAVLFWGSIEI). Residues 113-131 (YYYISSPPFGMEGYSAPAK) lie on the Periplasmic side of the membrane. The chain crosses the membrane as a helical span at residues 132–154 (EIGLAYSLFHWGPLPWATYSFLS). The Cytoplasmic segment spans residues 155-185 (VAFAYFFFVRKMEVIRPSSTLTPLVGEKHVN). The helical transmembrane segment at 186–216 (GLFGTVVDNFYLVALILAMGTSLGLATPLVT) threads the bilayer. Residues 217–230 (ECIQYLFGIPHTLQ) are Periplasmic-facing. The chain crosses the membrane as a helical span at residues 231-249 (LDAIIISCWILLNAICVAF). Topologically, residues 250 to 251 (GL) are cytoplasmic. The helical transmembrane segment at 252–277 (QKGVKIASDVRTYLSFLMLGWVFIVG) threads the bilayer. Over 278 to 311 (GASFIVNYFTDSVGTLLMYMPRMLFYTDPIGKGG) the chain is Periplasmic. The chain crosses the membrane as a helical span at residues 312-335 (FPQAWTVFYWAWWVIYAIQMSIFL). Residues 336-347 (ARISKGRTVREL) are Cytoplasmic-facing. Residues 348 to 369 (CLGMVSGLTAGTWLIWTILGGN) traverse the membrane as a helical segment. Over 370–404 (TLQLIDQNILNIPQLIDQYGVPRAIIETWAALPLS) the chain is Periplasmic. Residues 405-434 (TATMWGFFILCFIATVTLINACSYTLAMST) form a helical membrane-spanning segment. At 435–445 (CRSMKEGAEPP) the chain is on the cytoplasmic side. A helical transmembrane segment spans residues 446-464 (LLVRIGWSVLVGIIGIILL). Topologically, residues 465-468 (ALGG) are periplasmic. The chain crosses the membrane as a helical span at residues 469 to 492 (LKPIQTAIIAGGCPLFFVNIMVTL). Over 493–514 (SFIKDAKVHWKDCSPYTQKMTH) the chain is Cytoplasmic.

This sequence belongs to the BCCT transporter (TC 2.A.15) family. CaiT subfamily. In terms of assembly, homotrimer.

Its subcellular location is the cell inner membrane. The catalysed reaction is 4-(trimethylamino)butanoate(in) + (R)-carnitine(out) = 4-(trimethylamino)butanoate(out) + (R)-carnitine(in). It functions in the pathway amine and polyamine metabolism; carnitine metabolism. Catalyzes the exchange of L-carnitine for gamma-butyrobetaine. This is L-carnitine/gamma-butyrobetaine antiporter from Proteus mirabilis (strain HI4320).